A 1086-amino-acid polypeptide reads, in one-letter code: Endo-1,4-beta-xylanase C (1086 aa).

A signal peptide spans 1-31 (MRGKWLRLCLAAVLIVSLLPGLGAGEWKASA). CBM-cenC domains follow at residues 35–183 (GDIL…IRLV) and 197–359 (GQAL…ITAT). A GH10 domain is found at 365–710 (EKNIPDLAKK…KPAYWALVDP (346 aa)). Catalysis depends on Glu502, which acts as the Proton donor. Residue Asp556 is part of the active site. Residue Glu620 is the Nucleophile of the active site.

It belongs to the glycosyl hydrolase 10 (cellulase F) family.

It catalyses the reaction Endohydrolysis of (1-&gt;4)-beta-D-xylosidic linkages in xylans.. The protein operates within glycan degradation; xylan degradation. In terms of biological role, endoxylanase with high hydrolytic activity on birchwood and oat spelt xylan. Xylotetraose, xylotriose, xylobiose and xylose are the main products from birchwood xylan hydrolysis. Shows increasing activity on xylo-oligosaccharides of increasing length. Displays very low hydrolytic activity on Avicel, carboxymethylcellulose (CMC) and p-nitrophenyl-beta-xylopyranoside. Also shows transxylosidase activity, allowing the formation of xylo-oligosaccharides of higher degree of polymerization than the starting substrate. The polypeptide is Endo-1,4-beta-xylanase C (xynC) (Paenibacillus barcinonensis).